We begin with the raw amino-acid sequence, 648 residues long: Siderophore transporter MYCGRDRAFT_70577 (648 aa).

2 stretches are compositionally biased toward basic and acidic residues: residues 1-11 and 29-46; these read MRTSSESHSRS and SASKDHHDHDHHHKDTSI. Positions 1 to 58 are disordered; sequence MRTSSESHSRSDAFNGKNDASQVTVDSDSASKDHHDHDHHHKDTSINERQSQHVHQQA. A compositionally biased stretch (polar residues) spans 47 to 58; the sequence is NERQSQHVHQQA. 11 consecutive transmembrane segments (helical) span residues 79 to 99, 151 to 171, 205 to 225, 236 to 256, 303 to 323, 336 to 356, 409 to 429, 438 to 458, 468 to 488, 500 to 520, and 578 to 598; these read LLLYVLVASLALTMFAYALDQ, VVVLVVYAVGFAVAASSQGLA, AFWSGMLATPFLITTFINGFI, WGLGMFAIMMPVLLTPAIWTL, LIGLLLLGLAFSLILLALNLA, IAMLVIGFVILGLFIAYEALL, TIFIGTTTLTLCTMSPIGGLI, TLMVIGAIIKLIGYGVGLDGN, LAVSQVMLGMGAWTVIGARVG, VVISVMSLWSTMASSIGSTIA, and GIILAVSLVLAAVPVVFSCLM.

It belongs to the major facilitator superfamily.

The protein localises to the cell membrane. In terms of biological role, siderophore transporter; part of the gene cluster 14 that mediates the biosynthesis of a ferrichrome A-like siderophors which may contribute to organismal virulence. The sequence is that of Siderophore transporter MYCGRDRAFT_70577 from Zymoseptoria tritici (strain CBS 115943 / IPO323) (Speckled leaf blotch fungus).